A 75-amino-acid chain; its full sequence is MANKPFFRRRKVCPFSGDNAPAIDYKDTRLLQRYISERGKIVPSRITAVSAKKQRELARAIKRARFLALLPYAVK.

Belongs to the bacterial ribosomal protein bS18 family. In terms of assembly, part of the 30S ribosomal subunit. Forms a tight heterodimer with protein bS6.

Binds as a heterodimer with protein bS6 to the central domain of the 16S rRNA, where it helps stabilize the platform of the 30S subunit. The chain is Small ribosomal subunit protein bS18 from Paracoccus denitrificans (strain Pd 1222).